The following is a 263-amino-acid chain: Proline rich transmembrane protein 1B (263 aa).

Residues 1-17 (MEAGAGGAGSDTKGGGS) are compositionally biased toward gly residues. The tract at residues 1-107 (MEAGAGGAGS…IGFVGEPPPY (107 aa)) is disordered. Composition is skewed to low complexity over residues 37-47 (QMPAQPALPQL) and 75-86 (DAPAQAAGEAGP). The next 2 membrane-spanning stretches (helical) occupy residues 190–210 (MMESVLVTLFCCLLTGLIAIV) and 238–258 (VLFSLLFGVFVSTSWVIYVVV).

Belongs to the CD225/Dispanin family.

The protein localises to the membrane. This Homo sapiens (Human) protein is Proline rich transmembrane protein 1B.